The primary structure comprises 100 residues: Urease subunit gamma (100 aa).

This sequence belongs to the urease gamma subunit family. In terms of assembly, heterotrimer of UreA (gamma), UreB (beta) and UreC (alpha) subunits. Three heterotrimers associate to form the active enzyme.

It is found in the cytoplasm. It catalyses the reaction urea + 2 H2O + H(+) = hydrogencarbonate + 2 NH4(+). The protein operates within nitrogen metabolism; urea degradation; CO(2) and NH(3) from urea (urease route): step 1/1. This is Urease subunit gamma from Acinetobacter baumannii (strain SDF).